We begin with the raw amino-acid sequence, 56 residues long: Attractin (56 aa).

Intrachain disulfides connect Cys4–Cys41, Cys13–Cys33, and Cys20–Cys26.

As to expression, produced by the albumen gland of the egg cordons.

Its subcellular location is the secreted. Functionally, water-borne pheromone that attract the marine mollusk Aplysia into breeding aggregations and coordinate male and female reproductive behavior within the aggregation. The chain is Attractin (ATT) from Aplysia vaccaria (California black sea hare).